The chain runs to 247 residues: Triosephosphate isomerase (247 aa).

8–10 (NWK) provides a ligand contact to substrate. Residue H95 is the Electrophile of the active site. Residue E162 is the Proton acceptor of the active site. Substrate-binding residues include G168 and S207.

Belongs to the triosephosphate isomerase family. Homodimer.

The protein resides in the cytoplasm. It carries out the reaction D-glyceraldehyde 3-phosphate = dihydroxyacetone phosphate. It functions in the pathway carbohydrate biosynthesis; gluconeogenesis. The protein operates within carbohydrate degradation; glycolysis; D-glyceraldehyde 3-phosphate from glycerone phosphate: step 1/1. Functionally, involved in the gluconeogenesis. Catalyzes stereospecifically the conversion of dihydroxyacetone phosphate (DHAP) to D-glyceraldehyde-3-phosphate (G3P). This is Triosephosphate isomerase from Gluconacetobacter diazotrophicus (strain ATCC 49037 / DSM 5601 / CCUG 37298 / CIP 103539 / LMG 7603 / PAl5).